The following is a 117-amino-acid chain: Large ribosomal subunit protein uL18 (117 aa).

It belongs to the universal ribosomal protein uL18 family. Part of the 50S ribosomal subunit; part of the 5S rRNA/L5/L18/L25 subcomplex. Contacts the 5S and 23S rRNAs.

Its function is as follows. This is one of the proteins that bind and probably mediate the attachment of the 5S RNA into the large ribosomal subunit, where it forms part of the central protuberance. The sequence is that of Large ribosomal subunit protein uL18 from Klebsiella pneumoniae (strain 342).